A 243-amino-acid chain; its full sequence is 7-cyano-7-deazaguanine synthase (243 aa).

Position 9-19 (9-19) interacts with ATP; sequence FSGGQDSTTCL. Cysteine 205, cysteine 220, cysteine 223, and cysteine 226 together coordinate Zn(2+).

It belongs to the QueC family. Requires Zn(2+) as cofactor.

The catalysed reaction is 7-carboxy-7-deazaguanine + NH4(+) + ATP = 7-cyano-7-deazaguanine + ADP + phosphate + H2O + H(+). Its pathway is purine metabolism; 7-cyano-7-deazaguanine biosynthesis. Catalyzes the ATP-dependent conversion of 7-carboxy-7-deazaguanine (CDG) to 7-cyano-7-deazaguanine (preQ(0)). The sequence is that of 7-cyano-7-deazaguanine synthase from Albidiferax ferrireducens (strain ATCC BAA-621 / DSM 15236 / T118) (Rhodoferax ferrireducens).